A 158-amino-acid chain; its full sequence is Small ribosomal subunit protein uS7 (158 aa).

The protein belongs to the universal ribosomal protein uS7 family. As to quaternary structure, part of the 30S ribosomal subunit. Contacts proteins S9 and S11.

In terms of biological role, one of the primary rRNA binding proteins, it binds directly to 16S rRNA where it nucleates assembly of the head domain of the 30S subunit. Is located at the subunit interface close to the decoding center, probably blocks exit of the E-site tRNA. The sequence is that of Small ribosomal subunit protein uS7 from Granulibacter bethesdensis (strain ATCC BAA-1260 / CGDNIH1).